Consider the following 261-residue polypeptide: Tryptophan synthase alpha chain (261 aa).

Residues glutamate 49 and aspartate 60 each act as proton acceptor in the active site.

Belongs to the TrpA family. As to quaternary structure, tetramer of two alpha and two beta chains.

It catalyses the reaction (1S,2R)-1-C-(indol-3-yl)glycerol 3-phosphate + L-serine = D-glyceraldehyde 3-phosphate + L-tryptophan + H2O. It participates in amino-acid biosynthesis; L-tryptophan biosynthesis; L-tryptophan from chorismate: step 5/5. Functionally, the alpha subunit is responsible for the aldol cleavage of indoleglycerol phosphate to indole and glyceraldehyde 3-phosphate. This Roseiflexus sp. (strain RS-1) protein is Tryptophan synthase alpha chain.